The following is a 622-amino-acid chain: Iron transport multicopper oxidase FET5 (622 aa).

Residues 1–18 (MLFYSFVWSVLAASVALA) form the signal peptide. The Extracellular portion of the chain corresponds to 19-573 (KTHKLNYTAS…PKGFTTEGYL (555 aa)). Asn-24 carries N-linked (GlcNAc...) asparagine glycosylation. Plastocyanin-like domains lie at 43 to 146 (IGFN…FIIH) and 192 to 301 (NILF…IQMR). Cu cation-binding residues include His-79 and His-81. Asn-86 and Asn-115 each carry an N-linked (GlcNAc...) asparagine glycan. The Cu cation site is built by His-128 and His-130. 5 N-linked (GlcNAc...) asparagine glycosylation sites follow: Asn-196, Asn-200, Asn-246, Asn-295, and Asn-364. One can recognise a Plastocyanin-like 3 domain in the interval 392-514 (GDNINAQLLK…QGLASVFIEA (123 aa)). Cu cation-binding residues include His-418, His-421, and His-423. Residue Asn-455 is glycosylated (N-linked (GlcNAc...) asparagine). Positions 496, 497, 498, and 502 each coordinate Cu cation. The helical transmembrane segment at 574 to 594 (ALIISTIIGVWGLYSIAQYGI) threads the bilayer. The Cytoplasmic portion of the chain corresponds to 595 to 622 (GEVIPNDEKVYHTLREILAENEIEVSRG).

It belongs to the multicopper oxidase family. As to quaternary structure, interacts with FTH1. Cu cation serves as cofactor.

It localises to the cell membrane. Functionally, iron transport multicopper oxidase, which is required for Fe(2+) high affinity uptake. May be required to oxidize Fe(2+) and release it from the transporter. Essential component of copper-dependent iron transport. In Saccharomyces cerevisiae (strain ATCC 204508 / S288c) (Baker's yeast), this protein is Iron transport multicopper oxidase FET5 (FET5).